The following is a 597-amino-acid chain: Phosphomethylpyrimidine synthase (597 aa).

Residues N207, M236, Y265, H301, 321–323 (SRG), 362–365 (DGLR), and E401 each bind substrate. Position 405 (H405) interacts with Zn(2+). Y428 is a substrate binding site. H469 serves as a coordination point for Zn(2+). [4Fe-4S] cluster is bound by residues C549, C552, and C557.

The protein belongs to the ThiC family. Homodimer. It depends on [4Fe-4S] cluster as a cofactor.

It catalyses the reaction 5-amino-1-(5-phospho-beta-D-ribosyl)imidazole + S-adenosyl-L-methionine = 4-amino-2-methyl-5-(phosphooxymethyl)pyrimidine + CO + 5'-deoxyadenosine + formate + L-methionine + 3 H(+). It participates in cofactor biosynthesis; thiamine diphosphate biosynthesis. In terms of biological role, catalyzes the synthesis of the hydroxymethylpyrimidine phosphate (HMP-P) moiety of thiamine from aminoimidazole ribotide (AIR) in a radical S-adenosyl-L-methionine (SAM)-dependent reaction. The sequence is that of Phosphomethylpyrimidine synthase from Gluconobacter oxydans (strain 621H) (Gluconobacter suboxydans).